The primary structure comprises 37 residues: Photosystem I reaction center subunit VIII (37 aa).

A helical membrane pass occupies residues 7-27 (LPAIFVPLVGLVFPAIAMVSL).

It belongs to the PsaI family.

It localises to the plastid. Its subcellular location is the chloroplast thylakoid membrane. Functionally, may help in the organization of the PsaL subunit. In Morus indica (Mulberry), this protein is Photosystem I reaction center subunit VIII.